A 77-amino-acid chain; its full sequence is UPF0337 protein CE0198 (77 aa).

The segment at 1 to 77 (MGDLSNKAEG…PDVEHPEAVN (77 aa)) is disordered. 2 stretches are compositionally biased toward basic and acidic residues: residues 30-56 (DEGR…KDGA) and 64-77 (QDKD…EAVN).

Belongs to the UPF0337 (CsbD) family.

This is UPF0337 protein CE0198 from Corynebacterium efficiens (strain DSM 44549 / YS-314 / AJ 12310 / JCM 11189 / NBRC 100395).